Here is a 236-residue protein sequence, read N- to C-terminus: uncharacterized protein (236 aa).

The region spanning 7-74 (RTNRRDIYLK…PKIGSFVSRV (68 aa)) is the HTH gntR-type domain. Residues 34-53 (ENELAASMGVSRTPVRESLI) constitute a DNA-binding region (H-T-H motif).

This is an uncharacterized protein from Streptomyces ambofaciens.